A 229-amino-acid chain; its full sequence is AA9 family lytic polysaccharide monooxygenase E (229 aa).

An N-terminal signal peptide occupies residues M1 to S19. Residue H20 coordinates Cu(2+). C57 and C178 form a disulfide bridge. An N-linked (GlcNAc...) asparagine glycan is attached at N76. Position 99 (H99) interacts with Cu(2+). O2-binding residues include H164 and Q173. Y175 is a Cu(2+) binding site. N217 carries N-linked (GlcNAc...) asparagine glycosylation.

It belongs to the polysaccharide monooxygenase AA9 family. Requires Cu(2+) as cofactor.

The protein localises to the secreted. The catalysed reaction is [(1-&gt;4)-beta-D-glucosyl]n+m + reduced acceptor + O2 = 4-dehydro-beta-D-glucosyl-[(1-&gt;4)-beta-D-glucosyl]n-1 + [(1-&gt;4)-beta-D-glucosyl]m + acceptor + H2O.. In terms of biological role, lytic polysaccharide monooxygenase (LPMO) that depolymerizes crystalline and amorphous polysaccharides via the oxidation of scissile alpha- or beta-(1-4)-glycosidic bonds, yielding C1 and C4 oxidation products. Catalysis by LPMOs requires the reduction of the active-site copper from Cu(II) to Cu(I) by a reducing agent and H(2)O(2) or O(2) as a cosubstrate. The sequence is that of AA9 family lytic polysaccharide monooxygenase E from Botryotinia fuckeliana (strain B05.10) (Noble rot fungus).